We begin with the raw amino-acid sequence, 1068 residues long: Phosphatidylinositol 4,5-bisphosphate 3-kinase catalytic subunit alpha isoform (1068 aa).

Positions 16 to 105 (MPPRILVECL…QPFLKVIEPV (90 aa)) constitute a PI3K-ABD domain. Positions 187–289 (KGQIIVVIWV…GRMPNLMLMA (103 aa)) constitute a PI3K-RBD domain. One can recognise a C2 PI3K-type domain in the interval 330–487 (INSALRIKIL…DWFSSVVKFP (158 aa)). The 178-residue stretch at 517-694 (LARDNELREN…GLLLESYCRA (178 aa)) folds into the PIK helical domain. The PI3K/PI4K catalytic domain occupies 765-1051 (RLEECRIMSS…QMNDAHHGGW (287 aa)). The tract at residues 771–777 (IMSSAKR) is G-loop. Residues 912–920 (GIGDRHNSN) are catalytic loop. The interval 931 to 957 (HIDFGHFLDHKKKKFGYKRERVPFVLT) is activation loop.

This sequence belongs to the PI3/PI4-kinase family. Heterodimer of a catalytic subunit PIK3CA and a p85 regulatory subunit (PIK3R1, PIK3R2 or PIK3R3). Interacts with IRS1 in nuclear extracts. Interacts with RUFY3. Interacts with RASD2. Interacts with APPL1. Interacts with HRAS and KRAS. Interaction with HRAS/KRAS is required for PI3K pathway signaling and cell proliferation stimulated by EGF and FGF2. Interacts with FAM83B; activates the PI3K/AKT signaling cascade.

The catalysed reaction is L-seryl-[protein] + ATP = O-phospho-L-seryl-[protein] + ADP + H(+). The enzyme catalyses a 1,2-diacyl-sn-glycero-3-phospho-(1D-myo-inositol) + ATP = a 1,2-diacyl-sn-glycero-3-phospho-(1D-myo-inositol-3-phosphate) + ADP + H(+). It catalyses the reaction a 1,2-diacyl-sn-glycero-3-phospho-(1D-myo-inositol-4,5-bisphosphate) + ATP = a 1,2-diacyl-sn-glycero-3-phospho-(1D-myo-inositol-3,4,5-trisphosphate) + ADP + H(+). It carries out the reaction 1,2-dioctanoyl-sn-glycero-3-phospho-(1D-myo-inositol-4,5-bisphosphate) + ATP = 1,2-dioctanoyl-sn-glycero-3-phospho-(1D-myo-inositol-3,4,5-trisphosphate) + ADP + H(+). The catalysed reaction is 1-octadecanoyl-2-(5Z,8Z,11Z,14Z)-eicosatetraenoyl-sn-glycero-3-phospho-1D-myo-inositol 4,5-bisphosphate + ATP = 1-octadecanoyl-2-(5Z,8Z,11Z,14Z-eicosatetraenoyl)-sn-glycero-3-phospho-(1D-myo-inositol 3,4,5-triphosphate) + ADP + H(+). Its pathway is phospholipid metabolism; phosphatidylinositol phosphate biosynthesis. Its function is as follows. Phosphoinositide-3-kinase (PI3K) phosphorylates phosphatidylinositol (PI) and its phosphorylated derivatives at position 3 of the inositol ring to produce 3-phosphoinositides. Uses ATP and PtdIns(4,5)P2 (phosphatidylinositol 4,5-bisphosphate) to generate phosphatidylinositol 3,4,5-trisphosphate (PIP3). PIP3 plays a key role by recruiting PH domain-containing proteins to the membrane, including AKT1 and PDPK1, activating signaling cascades involved in cell growth, survival, proliferation, motility and morphology. Participates in cellular signaling in response to various growth factors. Involved in the activation of AKT1 upon stimulation by receptor tyrosine kinases ligands such as EGF, insulin, IGF1, VEGFA and PDGF. Involved in signaling via insulin-receptor substrate (IRS) proteins. Essential in endothelial cell migration during vascular development through VEGFA signaling, possibly by regulating RhoA activity. Required for lymphatic vasculature development, possibly by binding to RAS and by activation by EGF and FGF2, but not by PDGF. Regulates invadopodia formation through the PDPK1-AKT1 pathway. Participates in cardiomyogenesis in embryonic stem cells through a AKT1 pathway. Participates in vasculogenesis in embryonic stem cells through PDK1 and protein kinase C pathway. In addition to its lipid kinase activity, it displays a serine-protein kinase activity that results in the autophosphorylation of the p85alpha regulatory subunit as well as phosphorylation of other proteins such as 4EBP1, H-Ras, the IL-3 beta c receptor and possibly others. Plays a role in the positive regulation of phagocytosis and pinocytosis. The chain is Phosphatidylinositol 4,5-bisphosphate 3-kinase catalytic subunit alpha isoform (PIK3CA) from Bos taurus (Bovine).